Consider the following 374-residue polypeptide: MVVPFPGSPRPTLGVEWEIALVDRVTRDLSNTAAEVFDAVANLAGPEDPRITKELLRNTVELVTGIHSTVGEAMDDLDESLDLLRRAANPLGVDLICAGTHPFAQWSTQLVTRTPDYDELIERTQWWGRQMLIWGVHVHVGVSSPQKVFPILNALLQRYPHLLALSASSPMWAGVNTGYASNRALMFQQLPTAGLPYQFANWGQYEDFISDQMKTGVITKIGGMHWDIRPAPRWGTIEVRVFDGISTRAELSSLVALVHCLIVDLDRRFEAGENLPNLQPWHVKENKWRAARYGLDAEIILDEDSNERLVTDDLNDLLEKLAPTAVRLGCADELAAVAEIPRRGASYQRQRQVAEATGGDLVAVVDALVKELGT.

It belongs to the glutamate--cysteine ligase type 2 family. YbdK subfamily.

It carries out the reaction L-cysteine + L-glutamate + ATP = gamma-L-glutamyl-L-cysteine + ADP + phosphate + H(+). Its function is as follows. ATP-dependent carboxylate-amine ligase which exhibits weak glutamate--cysteine ligase activity. The protein is Putative glutamate--cysteine ligase 2-2 of Rhodococcus jostii (strain RHA1).